Here is a 1945-residue protein sequence, read N- to C-terminus: Rho GTPase-activating protein 21 (1945 aa).

Residues 26-53 (CEVSKNKDGKDQGEPVSPSEDEPFSWPG) form a disordered region. Positions 29–38 (SKNKDGKDQG) are enriched in basic and acidic residues. Phosphoserine is present on residues S42 and S63. The 110-residue stretch at 56-165 (TVMLKRTSQG…TLELSVMPKD (110 aa)) folds into the PDZ domain. 2 disordered regions span residues 210-229 (TAQPVETCPPDSLPNKQQTS) and 326-365 (HQTTGSRSLEPSGILLKSGNYSGHSEGISSSRSQAVDSPP). Low complexity predominate over residues 347-358 (SGHSEGISSSRS). The residue at position 454 (S454) is a Phosphoserine. Positions 499–512 (EATATVNSESQIPD) are enriched in polar residues. Positions 499–519 (EATATVNSESQIPDSNGERKQ) are disordered. R549 and R569 each carry omega-N-methylarginine. 2 disordered regions span residues 573 to 647 (PVSQ…RPVN) and 674 to 702 (EVSSCLPGTSAKTSPQLSENLGTSDLELP). Residues 589 to 600 (SNRNFPTTTGVS) show a composition bias toward polar residues. S610 and S619 each carry phosphoserine. Over residues 674–696 (EVSSCLPGTSAKTSPQLSENLGT) the composition is skewed to polar residues. A Phosphothreonine modification is found at T741. S851, S856, and S875 each carry phosphoserine. Disordered regions lie at residues 852–879 (HDQESVGPPSLDGQHSSKTERSKSYDEG) and 902–921 (ITDSQKSSEDSGSRKGSSSE). Over residues 866-879 (HSSKTERSKSYDEG) the composition is skewed to basic and acidic residues. The residue at position 876 (Y876) is a Phosphotyrosine. Residues S918, S920, S948, S1093, and S1109 each carry the phosphoserine modification. The interaction with ARF1 and ARF6 stretch occupies residues 924–1091 (SDAAREGWLQ…AKSEPKTQSP (168 aa)). A PH domain is found at 925-1034 (DAAREGWLQF…WIKTIQESSN (110 aa)). Residues 1080-1120 (LGAKSEPKTQSPHSPKEESERKLLSKDDTSPPKDKGTWRRG) form a disordered region. Basic and acidic residues predominate over residues 1093–1116 (SPKEESERKLLSKDDTSPPKDKGT). The Rho-GAP domain occupies 1141–1333 (VRLDDCPPAH…TLIQHHDWFF (193 aa)). 4 disordered regions span residues 1373–1396 (PGDVSDSATSDSAKSKGSWGSGKD), 1412–1632 (SRKR…PVFP), 1649–1794 (ARVS…LGGH), and 1846–1945 (RTSA…ETPP). The span at 1377–1395 (SDSATSDSAKSKGSWGSGK) shows a compositional bias: low complexity. A phosphoserine mark is found at S1412, S1426, and S1427. 2 stretches are compositionally biased toward basic and acidic residues: residues 1435–1457 (FFKKENTEQSHSEIKEESKRESE) and 1471–1488 (SNTKKDSGTTKEEKKIPW). A Glycyl lysine isopeptide (Lys-Gly) (interchain with G-Cter in SUMO) cross-link involves residue K1438. At T1504 the chain carries Phosphothreonine. Composition is skewed to low complexity over residues 1531–1556 (SDSGTLLSTSSQASLLRSSTKKSTSP) and 1569–1589 (TTTSDYSTTSSTTYLTSLDSS). Residues 1579 to 1848 (STTYLTSLDS…WLARERVRTS (270 aa)) are interaction with CTNNA1. A compositionally biased stretch (polar residues) spans 1590–1599 (RLSPEVQSVA). Positions 1611–1621 (SELVSEGRPVE) are enriched in basic and acidic residues. Position 1656 is a phosphoserine (S1656). Polar residues-rich tracts occupy residues 1658–1681 (GSEASCTEGSLTPSLDSRRQQFSS) and 1729–1738 (STGSLLTPSR). Phosphothreonine is present on T1669. S1729 bears the Phosphoserine mark. The segment covering 1739–1757 (SESEKQEATWKTKIADRLK) has biased composition (basic and acidic residues). Residues 1782–1792 (RKNIKRRHTLG) are compositionally biased toward basic residues. Residues 1871-1882 (PISTHSPPSQQP) show a composition bias toward polar residues. Low complexity predominate over residues 1887 to 1896 (AATSTLASTS). T1902 carries the phosphothreonine modification. S1906 is modified (phosphoserine). The span at 1907-1927 (PDQINRESFQNMSQNASSTAN) shows a compositional bias: polar residues. The span at 1932–1945 (KQSESPDTKAETPP) shows a compositional bias: basic and acidic residues.

As to quaternary structure, interacts with CTNNA1. Interacts with GTP-bound ARF1 and probably ARF6. In terms of processing, sumoylated with SUMO2 and SUMO3 in proliferating lymphocytes.

It localises to the golgi apparatus membrane. The protein localises to the cell junction. It is found in the cytoplasmic vesicle membrane. The protein resides in the cytoplasm. Its subcellular location is the cytoskeleton. In terms of biological role, functions as a GTPase-activating protein (GAP) for RHOA and CDC42. Downstream partner of ARF1 which may control Golgi apparatus structure and function. Also required for CTNNA1 recruitment to adherens junctions. The chain is Rho GTPase-activating protein 21 from Mus musculus (Mouse).